Reading from the N-terminus, the 299-residue chain is Inosose dehydratase (299 aa).

It belongs to the IolE/MocC family. Requires glutathione as cofactor. The cofactor is Co(2+). It depends on Mn(2+) as a cofactor.

It carries out the reaction scyllo-inosose = 3D-3,5/4-trihydroxycyclohexane-1,2-dione + H2O. Functionally, catalyzes the dehydration of inosose (2-keto-myo-inositol, 2KMI or 2,4,6/3,5-pentahydroxycyclohexanone) to 3D-(3,5/4)-trihydroxycyclohexane-1,2-dione (D-2,3-diketo-4-deoxy-epi-inositol). This chain is Inosose dehydratase, found in Klebsiella pneumoniae subsp. pneumoniae (strain ATCC 700721 / MGH 78578).